Reading from the N-terminus, the 384-residue chain is Cell division protein FtsZ (384 aa).

Residues 20-24 (GGGSN), 107-109 (GTG), glutamate 138, arginine 142, and asparagine 186 contribute to the GTP site.

This sequence belongs to the FtsZ family. As to quaternary structure, homodimer. Polymerizes to form a dynamic ring structure in a strictly GTP-dependent manner. Interacts directly with several other division proteins.

Its subcellular location is the cytoplasm. Functionally, essential cell division protein that forms a contractile ring structure (Z ring) at the future cell division site. The regulation of the ring assembly controls the timing and the location of cell division. One of the functions of the FtsZ ring is to recruit other cell division proteins to the septum to produce a new cell wall between the dividing cells. Binds GTP and shows GTPase activity. The chain is Cell division protein FtsZ from Buchnera aphidicola subsp. Acyrthosiphon pisum (strain APS) (Acyrthosiphon pisum symbiotic bacterium).